A 215-amino-acid chain; its full sequence is 3-isopropylmalate dehydratase small subunit (215 aa).

It belongs to the LeuD family. LeuD type 1 subfamily. Heterodimer of LeuC and LeuD.

The catalysed reaction is (2R,3S)-3-isopropylmalate = (2S)-2-isopropylmalate. It functions in the pathway amino-acid biosynthesis; L-leucine biosynthesis; L-leucine from 3-methyl-2-oxobutanoate: step 2/4. In terms of biological role, catalyzes the isomerization between 2-isopropylmalate and 3-isopropylmalate, via the formation of 2-isopropylmaleate. The protein is 3-isopropylmalate dehydratase small subunit of Xanthomonas oryzae pv. oryzae (strain MAFF 311018).